The primary structure comprises 404 residues: S-adenosylmethionine synthase (404 aa).

The segment covering 1–13 (MSQSRYFFTSESV) has biased composition (polar residues). The disordered stretch occupies residues 1–21 (MSQSRYFFTSESVSEGHPDKV). Residue His-17 coordinates ATP. Position 19 (Asp-19) interacts with Mg(2+). Glu-45 contributes to the K(+) binding site. L-methionine contacts are provided by Glu-58 and Gln-101. The segment at 101-111 (QSPDINRGVDR) is flexible loop. ATP-binding positions include 172-174 (DAK), 245-246 (RF), Asp-254, 260-261 (RK), Ala-277, and Lys-281. Asp-254 contacts L-methionine. Position 285 (Lys-285) interacts with L-methionine.

Belongs to the AdoMet synthase family. In terms of assembly, homotetramer; dimer of dimers. Mg(2+) is required as a cofactor. Requires K(+) as cofactor.

The protein localises to the cytoplasm. It catalyses the reaction L-methionine + ATP + H2O = S-adenosyl-L-methionine + phosphate + diphosphate. It functions in the pathway amino-acid biosynthesis; S-adenosyl-L-methionine biosynthesis; S-adenosyl-L-methionine from L-methionine: step 1/1. Catalyzes the formation of S-adenosylmethionine (AdoMet) from methionine and ATP. The overall synthetic reaction is composed of two sequential steps, AdoMet formation and the subsequent tripolyphosphate hydrolysis which occurs prior to release of AdoMet from the enzyme. This is S-adenosylmethionine synthase from Chlorobium phaeobacteroides (strain DSM 266 / SMG 266 / 2430).